We begin with the raw amino-acid sequence, 442 residues long: NAD kinase 2, mitochondrial (442 aa).

Residues 1–62 (MTCYRGFLLG…RELAGCGSRA (62 aa)) constitute a mitochondrion transit peptide. Over residues 24-36 (RGPGAGGPAARPR) the composition is skewed to low complexity. The tract at residues 24-60 (RGPGAGGPAARPRLGGDGGGRRHLGQGQPRELAGCGS) is disordered. N6-acetyllysine; alternate is present on K76. K76 bears the N6-succinyllysine; alternate mark. S188 is subject to Phosphoserine. An N6-succinyllysine modification is found at K302. The residue at position 317 (K317) is an N6-acetyllysine; alternate. K317 is subject to N6-succinyllysine; alternate. Phosphoserine is present on S367. N6-acetyllysine is present on K397.

It belongs to the NAD kinase family. In terms of assembly, homodimer. Widely expressed.

The protein resides in the mitochondrion. It carries out the reaction NAD(+) + ATP = ADP + NADP(+) + H(+). Its activity is regulated as follows. Inhibited by NADH, NADPH and NADP(+). In terms of biological role, mitochondrial NAD(+) kinase that phosphorylates NAD(+) to yield NADP(+). Can use both ATP or inorganic polyphosphate as the phosphoryl donor. Also has weak NADH kinase activity in vitro; however NADH kinase activity is much weaker than the NAD(+) kinase activity and may not be relevant in vivo. The protein is NAD kinase 2, mitochondrial (NADK2) of Homo sapiens (Human).